Reading from the N-terminus, the 149-residue chain is UPF0260 protein PSEEN4031 (149 aa).

The protein belongs to the UPF0260 family.

This is UPF0260 protein PSEEN4031 from Pseudomonas entomophila (strain L48).